Here is a 190-residue protein sequence, read N- to C-terminus: Protein FAM210B, mitochondrial (190 aa).

A mitochondrion-targeting transit peptide spans 1–58 (MAGLLTLLGPAGRVSTRLRPLAPWLLGTATSCAPPLWALALSHPVPDARLLRTARGDC). The segment covering 56–66 (GDCLSRQEPNR) has biased composition (basic and acidic residues). The segment at 56 to 81 (GDCLSRQEPNRTPEPGGSVTGTEKKL) is disordered. Positions 78 to 189 (EKKLSRTQQL…VGLFKPPATK (112 aa)) constitute a DUF1279 domain. The next 2 helical transmembrane spans lie at 97–117 (VGVS…YTVV) and 148–168 (FVVA…ITLV).

It belongs to the FAM210 family. As to expression, expressed in late erythroblast differentiation stages.

The protein resides in the mitochondrion. The protein localises to the mitochondrion outer membrane. In terms of biological role, plays a role in erythroid differentiation. Involved in cell proliferation and tumor cell growth suppression. Involved in the metabolic reprogramming of cancer cells in a PDK4-dependent manner. The chain is Protein FAM210B, mitochondrial from Mus musculus (Mouse).